The primary structure comprises 214 residues: Guanylate kinase (214 aa).

The Guanylate kinase-like domain occupies 12-191; sequence GLMLVMSSPS…SIAAVQAILA (180 aa). Residue 19 to 26 coordinates ATP; that stretch reads SPSGAGKT.

Belongs to the guanylate kinase family.

It localises to the cytoplasm. The enzyme catalyses GMP + ATP = GDP + ADP. Its function is as follows. Essential for recycling GMP and indirectly, cGMP. In Paramagnetospirillum magneticum (strain ATCC 700264 / AMB-1) (Magnetospirillum magneticum), this protein is Guanylate kinase.